A 1016-amino-acid polypeptide reads, in one-letter code: Enhancer of polycomb-like protein 1 (1016 aa).

Disordered regions lie at residues 1-50 (MAIH…NDLE), 96-119 (LLGSQNEDGDKKKDDSDKKTDASV), 450-488 (KEEDEDKESSKIKRDKRSRFDSSREGSATSMPGSATIGT), 499-518 (GQVHHTQEASSSSQPYVKLP), and 842-1016 (ARMR…PNRK). Over residues 35–50 (YKQSDLPTLNASNDLE) the composition is skewed to polar residues. Composition is skewed to basic and acidic residues over residues 103-116 (DGDKKKDDSDKKTD) and 457-473 (ESSKIKRDKRSRFDSSR). Polar residues predominate over residues 475-488 (GSATSMPGSATIGT). Positions 842–883 (ARMRTLQQQQRNNKQQAAGQSSGSSSASLGSNTNSNSSISGQ) are enriched in low complexity. The segment covering 884 to 902 (ADQGQTNLTNSGITRQGGA) has biased composition (polar residues). A compositionally biased stretch (low complexity) spans 904–923 (VNGSQTSTTNNTRSSVSGGS). Positions 928–956 (LPTQSSQRSNTNSPLLASQPQGYSQQQKF) are enriched in polar residues. The segment covering 960-971 (PPTSQSQSQSPT) has biased composition (low complexity). Polar residues predominate over residues 976 to 994 (QLQTSKMYNKHGSNITPSN).

Belongs to the enhancer of polycomb family. As to quaternary structure, component of the NuA4 histone acetyltransferase complex.

The protein resides in the nucleus. In terms of biological role, component of the NuA4 histone acetyltransferase complex which is involved in transcriptional activation of selected genes principally by acetylation of nucleosomal histone H4 and H2A. The NuA4 complex is also involved in DNA repair. Involved in gene silencing by neighboring heterochromatin, blockage of the silencing spreading along the chromosome, and required for cell cycle progression through G2/M. This chain is Enhancer of polycomb-like protein 1 (EPL1), found in Debaryomyces hansenii (strain ATCC 36239 / CBS 767 / BCRC 21394 / JCM 1990 / NBRC 0083 / IGC 2968) (Yeast).